We begin with the raw amino-acid sequence, 394 residues long: Probable 6-phosphogluconolactonase ARB_02015 (394 aa).

The N-terminal stretch at Met1–Ala21 is a signal peptide. N-linked (GlcNAc...) asparagine glycosylation is present at Asn51.

This sequence belongs to the cycloisomerase 2 family.

It localises to the secreted. It catalyses the reaction 6-phospho-D-glucono-1,5-lactone + H2O = 6-phospho-D-gluconate + H(+). It participates in carbohydrate degradation; pentose phosphate pathway; D-ribulose 5-phosphate from D-glucose 6-phosphate (oxidative stage): step 2/3. Catalyzes the hydrolysis of 6-phosphogluconolactone to 6-phosphogluconate. The sequence is that of Probable 6-phosphogluconolactonase ARB_02015 from Arthroderma benhamiae (strain ATCC MYA-4681 / CBS 112371) (Trichophyton mentagrophytes).